A 503-amino-acid polypeptide reads, in one-letter code: ATP synthase subunit alpha (503 aa).

170-177 (GDRKTGKT) contributes to the ATP binding site.

Belongs to the ATPase alpha/beta chains family. In terms of assembly, F-type ATPases have 2 components, CF(1) - the catalytic core - and CF(0) - the membrane proton channel. CF(1) has five subunits: alpha(3), beta(3), gamma(1), delta(1), epsilon(1). CF(0) has four main subunits: a(1), b(1), b'(1) and c(9-12).

The protein localises to the cellular thylakoid membrane. The enzyme catalyses ATP + H2O + 4 H(+)(in) = ADP + phosphate + 5 H(+)(out). Functionally, produces ATP from ADP in the presence of a proton gradient across the membrane. The alpha chain is a regulatory subunit. The protein is ATP synthase subunit alpha of Synechocystis sp. (strain ATCC 27184 / PCC 6803 / Kazusa).